Consider the following 281-residue polypeptide: Glutamate racemase (281 aa).

Residues 13–14 (DS) and 45–46 (YG) each bind substrate. Cys-76 acts as the Proton donor/acceptor in catalysis. A substrate-binding site is contributed by 77-78 (NT). Catalysis depends on Cys-185, which acts as the Proton donor/acceptor. A substrate-binding site is contributed by 186–187 (TH).

The protein belongs to the aspartate/glutamate racemases family.

The enzyme catalyses L-glutamate = D-glutamate. It participates in cell wall biogenesis; peptidoglycan biosynthesis. Its function is as follows. Provides the (R)-glutamate required for cell wall biosynthesis. The chain is Glutamate racemase from Rippkaea orientalis (strain PCC 8801 / RF-1) (Cyanothece sp. (strain PCC 8801)).